The primary structure comprises 361 residues: Hydroxyproline O-arabinosyltransferase PLENTY (361 aa).

A helical; Signal-anchor membrane pass occupies residues Leu-13–Ile-33.

The protein resides in the golgi apparatus membrane. The catalysed reaction is trans-4-hydroxy-L-prolyl-[protein] + UDP-beta-L-arabinofuranose = O-(beta-L-arabinofuranosyl)-trans-4-hydroxy-L-prolyl-[protein] + UDP + H(+). In terms of biological role, glycosyltransferase involved in the O-arabinosylation of several proteins including extensins and small signaling peptides. Catalyzes the transfer of the initial L-arabinose to the hydroxyl group of Hyp residues. Probably involved in the arabinosylation of CLAVATA3/ESR-related (CLE) signaling peptides that move from root to shoot, to interact with receptor kinase signaling that regulates nodulation. Involved in long distance nodulation signaling events. Involved in the autoregulation of nodulation (AON), a long distance systemic signaling from root to shoot and back again, which allows legumes to limit the number of root nodules formed based on available nitrogen and previous rhizobial colonization. This Lotus japonicus (Lotus corniculatus var. japonicus) protein is Hydroxyproline O-arabinosyltransferase PLENTY.